The primary structure comprises 145 residues: Large ribosomal subunit protein uL15 (145 aa).

The segment at 1–58 (MFNLLKPKGASKRRKIVGRGPGSGLGKTSGRGQKGQKARNTSPRLGFEGGQTPLYRRL) is disordered. The segment covering 19–33 (RGPGSGLGKTSGRGQ) has biased composition (gly residues).

The protein belongs to the universal ribosomal protein uL15 family. Part of the 50S ribosomal subunit.

In terms of biological role, binds to the 23S rRNA. This Borrelia garinii subsp. bavariensis (strain ATCC BAA-2496 / DSM 23469 / PBi) (Borreliella bavariensis) protein is Large ribosomal subunit protein uL15.